Reading from the N-terminus, the 62-residue chain is uncharacterized protein (62 aa).

Residues Met1–Thr18 show a composition bias toward polar residues. Residues Met1–Ala24 form a disordered region.

This is an uncharacterized protein from Rickettsia conorii (strain ATCC VR-613 / Malish 7).